The chain runs to 365 residues: NAC domain-containing protein 43 (365 aa).

The region spanning 16–180 is the NAC domain; the sequence is VPPGFRFHPT…GWVVCRIFKK (165 aa). Residues 116 to 186 mediate DNA binding; the sequence is IGMRKTLVFY…IFKKKNLHKT (71 aa).

Expressed in various aboveground tissues undergoing thickening of the lignified secondary wall such as anthers, filaments of stamens, the base of carpels, styles, the boundaries between siliques and pedicels, the midrib of leaf veins, and inflorescence stems, specifically in interfascicular fibers (sclerenchyma), cells differentiating into vascular vessels, and xylary fibers (secondary xylem).

The protein resides in the nucleus. Its function is as follows. Transcription activator of genes involved in biosynthesis of secondary walls. Together with NST2 and NST3, required for the secondary cell wall thickening of sclerenchymatous fibers, secondary xylem (tracheary elements), and of the anther endocethium, which is necessary for anther dehiscence. May also regulate the secondary cell wall lignification of other tissues. This Arabidopsis thaliana (Mouse-ear cress) protein is NAC domain-containing protein 43 (NAC043).